The sequence spans 407 residues: Phosphopentomutase (407 aa).

The Mn(2+) site is built by D11, D305, H310, D346, H347, and H358.

This sequence belongs to the phosphopentomutase family. It depends on Mn(2+) as a cofactor.

The protein localises to the cytoplasm. The enzyme catalyses 2-deoxy-alpha-D-ribose 1-phosphate = 2-deoxy-D-ribose 5-phosphate. It carries out the reaction alpha-D-ribose 1-phosphate = D-ribose 5-phosphate. It functions in the pathway carbohydrate degradation; 2-deoxy-D-ribose 1-phosphate degradation; D-glyceraldehyde 3-phosphate and acetaldehyde from 2-deoxy-alpha-D-ribose 1-phosphate: step 1/2. In terms of biological role, isomerase that catalyzes the conversion of deoxy-ribose 1-phosphate (dRib-1-P) and ribose 1-phosphate (Rib-1-P) to deoxy-ribose 5-phosphate (dRib-5-P) and ribose 5-phosphate (Rib-5-P), respectively. In Legionella pneumophila (strain Lens), this protein is Phosphopentomutase.